Consider the following 617-residue polypeptide: Type VII secretion systems protein EssD (617 aa).

The disordered stretch occupies residues 420–448 (QNHVTHGPKDSMVRSEGKHSISSHEMNSS). Over residues 426-438 (GPKDSMVRSEGKH) the composition is skewed to basic and acidic residues.

This sequence belongs to the EssD family. Interacts (via C-terminal) with EssG; this interaction blocks EssD activity. Interacts with EssE.

It localises to the secreted. It is found in the cell membrane. In terms of biological role, component of the type VII secretion system (Ess). Plays a role in Ess secretion during infection. Required for the efficient secretion of EsxA. Required for abscess formation and staphylococcal persistence in host tissue. Possesses a toxic DNase activity that is modulated by EssG by forming a nuclease toxin-antitoxin pair. This nuclease toxin targets competitor bacteria. The protein is Type VII secretion systems protein EssD of Staphylococcus aureus (strain Newman).